A 472-amino-acid chain; its full sequence is Acyltransferase PapA3 (472 aa).

Belongs to the PapA acyltransferase family.

It carries out the reaction a long-chain fatty acyl-CoA + alpha,alpha-trehalose = a 2-O-(long-chain fatty acyl)-alpha,alpha-trehalose + CoA. The catalysed reaction is a mycolipenoyl-CoA + a 2-O-(long-chain fatty acyl)-alpha,alpha-trehalose = a 2-O-(long-chain fatty acyl)-3-O-mycolipenoyl-trehalose + CoA. The enzyme catalyses alpha,alpha-trehalose + hexadecanoyl-CoA = 2-O-hexadecanoyl-alpha,alpha-trehalose + CoA. It catalyses the reaction 2-O-hexadecanoyl-alpha,alpha-trehalose + hexadecanoyl-CoA = 2-O,3-O-dihexadecanoyl-alpha,alpha-trehalose + CoA. Involved in the biosynthesis of polyacyltrehalose (PAT), a pentaacylated, trehalose-based glycolipid that could have a role in anchoring the bacterial capsule. Catalyzes the sequential transfer of two palmitoyl groups onto a single glucose residue of trehalose generating the diacylated product 2,3-diacyltrehalose (trehalose dipalmitate). In Mycobacterium tuberculosis (strain CDC 1551 / Oshkosh), this protein is Acyltransferase PapA3 (papA3).